The sequence spans 179 residues: Natural killer cells antigen CD94 (179 aa).

The Cytoplasmic segment spans residues 1 to 10; that stretch reads MAVSRITRWR. A helical; Signal-anchor for type II membrane protein transmembrane segment spans residues 11-31; that stretch reads LMSMFFGIKCLFLIVALGVLV. Residues 32–179 lie on the Extracellular side of the membrane; sequence KNSFTIQNIQ…NRFICKQLPT (148 aa). 4 disulfide bridges follow: Cys58–Cys70, Cys61–Cys72, Cys89–Cys174, and Cys152–Cys166. One can recognise a C-type lectin domain in the interval 68 to 175; it reads HQCSCYFISK…CENKNRFICK (108 aa). The N-linked (GlcNAc...) asparagine glycan is linked to Asn93.

Can form disulfide-bonded heterodimer with NKG2 family members KLRC1 and KLRC2. KLRD1-KLRC1 heterodimer interacts with peptide-bound MHC-E-B2M heterotrimeric complex. KLRD1 plays a prominent role in directly interacting with MHC-E. KLRD1-KLRC1 interacts with much higher affinity with peptide-bound MHC-E-B2M than KLRD1-KLRC2. Interacts with the adapter protein TYROBP/DAP12; this interaction is required for cell surface expression and cell activation.

The protein resides in the cell membrane. Immune receptor involved in self-nonself discrimination. In complex with KLRC1 or KLRC2 on cytotoxic and regulatory lymphocyte subsets, recognizes non-classical major histocompatibility (MHC) class Ib molecule MHC-E loaded with self-peptides derived from the signal sequence of classical MHC class Ia and non-classical MHC class Ib molecules. Enables cytotoxic cells to monitor the expression of MHC class I molecules in healthy cells and to tolerate self. Primarily functions as a ligand binding subunit as it lacks the capacity to signal. Functionally, KLRD1-KLRC1 acts as an immune inhibitory receptor. Key inhibitory receptor on natural killer (NK) cells that regulates their activation and effector functions. Dominantly counteracts T cell receptor signaling on a subset of memory/effector CD8-positive T cells as part of an antigen-driven response to avoid autoimmunity. On intraepithelial CD8-positive gamma-delta regulatory T cells triggers TGFB1 secretion, which in turn limits the cytotoxic programming of intraepithelial CD8-positive alpha-beta T cells, distinguishing harmless from pathogenic antigens. In MHC-E-rich tumor microenvironment, acts as an immune inhibitory checkpoint and may contribute to progressive loss of effector functions of NK cells and tumor-specific T cells, a state known as cell exhaustion. Upon MHC-E-peptide binding, transmits intracellular signals through KLRC1 immunoreceptor tyrosine-based inhibition motifs (ITIMs) by recruiting INPP5D/SHIP-1 and INPPL1/SHIP-2 tyrosine phosphatases to ITIMs, and ultimately opposing signals transmitted by activating receptors through dephosphorylation of proximal signaling molecules. Its function is as follows. KLRD1-KLRC2 acts as an immune activating receptor. On cytotoxic lymphocyte subsets recognizes MHC-E loaded with signal sequence-derived peptides from non-classical MHC class Ib MHC-G molecules, likely playing a role in the generation and effector functions of adaptive NK cells and in maternal-fetal tolerance during pregnancy. Regulates the effector functions of terminally differentiated cytotoxic lymphocyte subsets, and in particular may play a role in adaptive NK cell response to viral infection. Upon MHC-E-peptide binding, transmits intracellular signals via the adapter protein TYROBP/DAP12, triggering the phosphorylation of proximal signaling molecules and cell activation. This is Natural killer cells antigen CD94 (Klrd1) from Rattus norvegicus (Rat).